A 591-amino-acid polypeptide reads, in one-letter code: Metalloendopeptidase OPG085 (591 aa).

Zn(2+) is bound at residue His-41. Glu-44 is a catalytic residue. Residue His-45 coordinates Zn(2+).

Belongs to the peptidase M44 family. It depends on Zn(2+) as a cofactor. Post-translationally, undergoes proteolytic processing during the course of infection. May be cleaved into 46 kDa and 22 kDa products (Potential).

The protein localises to the virion. Probably involved in maturation of some viral proteins by processing them preferentially at Ala-Gly-|-Ser/Thr/Lys motifs. Does not seem to be responsible for the cleavage of major core proteins. This Homo sapiens (Human) protein is Metalloendopeptidase OPG085 (OPG085).